Here is a 58-residue protein sequence, read N- to C-terminus: Small ribosomal subunit protein bS21 (58 aa).

The interval 39–58 (DKPSVKKRAKSKAAAKYRSR) is disordered. Basic residues predominate over residues 43-58 (VKKRAKSKAAAKYRSR).

The protein belongs to the bacterial ribosomal protein bS21 family.

This is Small ribosomal subunit protein bS21 from Chlamydia abortus (strain DSM 27085 / S26/3) (Chlamydophila abortus).